Here is a 1430-residue protein sequence, read N- to C-terminus: Gag-Pol polyprotein (1430 aa).

A lipid anchor (N-myristoyl glycine; by host) is attached at Gly-2. The tract at residues 7–31 is interaction with Gp41; the sequence is VLSGGKLDAWEKIRLRPGGKKKYRL. An interaction with host CALM1 region spans residues 8–43; the sequence is LSGGKLDAWEKIRLRPGGKKKYRLKHLVWASRELER. Residues 12-19 form an interaction with host AP3D1 region; sequence KLDAWEKI. The tract at residues 14–33 is interaction with membrane phosphatidylinositol 4,5-bisphosphate and RNA; the sequence is DAWEKIRLRPGGKKKYRLKH. The Nuclear export signal motif lies at 16–22; it reads WEKIRLR. The Nuclear localization signal motif lies at 26-32; sequence KKKYRLK. An interaction with membrane phosphatidylinositol 4,5-bisphosphate region spans residues 73–77; the sequence is EELKS. Residue Tyr-128 is modified to Phosphotyrosine; by host. The tract at residues 185-223 is interaction with human PPIA/CYPA and NUP153; it reads NTVGGHQAAMQMLKDTINEEAAEWDRLHPTQAGPIPPGQ. A dimerization/Multimerization of capsid protein p24 region spans residues 273 to 359; sequence YSPVGILDIR…GGPSHKARVL (87 aa). CCHC-type zinc fingers lie at residues 385–402 and 406–423; these read VKCFNCGKEGHIAKNCRA and KGCWKCGREGHQMKDCTE. Residues 451–474 are disordered; it reads VSPASRELQVRGGDNPISEAGAER. The tract at residues 484–488 is dimerization of protease; the sequence is PQITL. In terms of domain architecture, Peptidase A2 spans 503 to 572; the sequence is KEALLDTGAD…TPVNIIGRNM (70 aa). The active-site For protease activity; shared with dimeric partner is Asp-508. 2 dimerization of protease regions span residues 532-538 and 571-583; these read GIGGFIK and NMLTQIGCTLHFP. The Reverse transcriptase domain maps to 626–816; that stretch reads EGKISKIGPE…PPFLWMGYEL (191 aa). 3 residues coordinate Mg(2+): Asp-692, Asp-767, and Asp-768. An RT 'primer grip' region spans residues 809-817; that stretch reads FLWMGYELH. The Tryptophan repeat motif signature appears at 980-996; it reads WDTWWTEYWQATWIPEW. An RNase H type-1 domain is found at 1016-1139; sequence IVGAETFYVD…VDKLVSAGIR (124 aa). Mg(2+) contacts are provided by Asp-1025, Glu-1060, Asp-1080, and Asp-1131. The Integrase-type zinc finger occupies 1145-1186; it reads DGIDKAQEEHEKYHNNWRAMASDFNIPAVVAKEIVASCDKCQ. 4 residues coordinate Zn(2+): His-1154, His-1158, Cys-1182, and Cys-1185. In terms of domain architecture, Integrase catalytic spans 1196–1346; it reads VDCSPGIWQL…SAGERTIDII (151 aa). Mg(2+)-binding residues include Asp-1206, Asp-1258, and Glu-1294. Residues 1365-1412 constitute a DNA-binding region (integrase-type); that stretch reads FRVYYRDSRDPVWKGPAKLLWKGEGAVVIQDNSEIKVVPRRKAKIIRD.

Homotrimer; further assembles as hexamers of trimers. Interacts with gp41 (via C-terminus). Interacts with host CALM1; this interaction induces a conformational change in the Matrix protein, triggering exposure of the myristate group. Interacts with host AP3D1; this interaction allows the polyprotein trafficking to multivesicular bodies during virus assembly. Part of the pre-integration complex (PIC) which is composed of viral genome, matrix protein, Vpr and integrase. In terms of assembly, homodimer; the homodimer further multimerizes as homohexamers or homopentamers. Interacts with human PPIA/CYPA; This interaction stabilizes the capsid. Interacts with human NUP153. Interacts with host PDZD8; this interaction stabilizes the capsid. Interacts with monkey TRIM5; this interaction destabilizes the capsid. As to quaternary structure, homodimer, whose active site consists of two apposed aspartic acid residues. Heterodimer of p66 RT and p51 RT (RT p66/p51). Heterodimerization of RT is essential for DNA polymerase activity. The overall folding of the subdomains is similar in p66 RT and p51 RT but the spatial arrangements of the subdomains are dramatically different. In terms of assembly, homotetramer; may further associate as a homohexadecamer. Part of the pre-integration complex (PIC) which is composed of viral genome, matrix protein, Vpr and integrase. Interacts with human SMARCB1/INI1 and human PSIP1/LEDGF isoform 1. Interacts with human KPNA3; this interaction might play a role in nuclear import of the pre-integration complex. Interacts with human NUP153; this interaction might play a role in nuclear import of the pre-integration complex. It depends on Mg(2+) as a cofactor. In terms of processing, specific enzymatic cleavages by the viral protease yield mature proteins. The protease is released by autocatalytic cleavage. The polyprotein is cleaved during and after budding, this process is termed maturation. Proteolytic cleavage of p66 RT removes the RNase H domain to yield the p51 RT subunit. Nucleocapsid protein p7 might be further cleaved after virus entry. Post-translationally, tyrosine phosphorylated presumably in the virion by a host kinase. Phosphorylation is apparently not a major regulator of membrane association. Phosphorylated possibly by host MAPK1; this phosphorylation is necessary for Pin1-mediated virion uncoating. In terms of processing, methylated by host PRMT6, impairing its function by reducing RNA annealing and the initiation of reverse transcription.

The protein localises to the host cell membrane. It localises to the host endosome. The protein resides in the host multivesicular body. It is found in the virion membrane. Its subcellular location is the host nucleus. The protein localises to the host cytoplasm. It localises to the virion. The enzyme catalyses Specific for a P1 residue that is hydrophobic, and P1' variable, but often Pro.. It carries out the reaction Endohydrolysis of RNA in RNA/DNA hybrids. Three different cleavage modes: 1. sequence-specific internal cleavage of RNA. Human immunodeficiency virus type 1 and Moloney murine leukemia virus enzymes prefer to cleave the RNA strand one nucleotide away from the RNA-DNA junction. 2. RNA 5'-end directed cleavage 13-19 nucleotides from the RNA end. 3. DNA 3'-end directed cleavage 15-20 nucleotides away from the primer terminus.. The catalysed reaction is 3'-end directed exonucleolytic cleavage of viral RNA-DNA hybrid.. It catalyses the reaction DNA(n) + a 2'-deoxyribonucleoside 5'-triphosphate = DNA(n+1) + diphosphate. Protease: The viral protease is inhibited by many synthetic protease inhibitors (PIs), such as amprenavir, atazanavir, indinavir, loprinavir, nelfinavir, ritonavir and saquinavir. Use of protease inhibitors in tritherapy regimens permit more ambitious therapeutic strategies. Reverse transcriptase/ribonuclease H: RT can be inhibited either by nucleoside RT inhibitors (NRTIs) or by non nucleoside RT inhibitors (NNRTIs). NRTIs act as chain terminators, whereas NNRTIs inhibit DNA polymerization by binding a small hydrophobic pocket near the RT active site and inducing an allosteric change in this region. Classical NRTIs are abacavir, adefovir (PMEA), didanosine (ddI), lamivudine (3TC), stavudine (d4T), tenofovir (PMPA), zalcitabine (ddC), and zidovudine (AZT). Classical NNRTIs are atevirdine (BHAP U-87201E), delavirdine, efavirenz (DMP-266), emivirine (I-EBU), and nevirapine (BI-RG-587). The tritherapies used as a basic effective treatment of AIDS associate two NRTIs and one NNRTI. Functionally, mediates, with Gag polyprotein, the essential events in virion assembly, including binding the plasma membrane, making the protein-protein interactions necessary to create spherical particles, recruiting the viral Env proteins, and packaging the genomic RNA via direct interactions with the RNA packaging sequence (Psi). Gag-Pol polyprotein may regulate its own translation, by the binding genomic RNA in the 5'-UTR. At low concentration, the polyprotein would promote translation, whereas at high concentration, the polyprotein would encapsidate genomic RNA and then shut off translation. Its function is as follows. Targets the polyprotein to the plasma membrane via a multipartite membrane-binding signal, that includes its myristoylated N-terminus. Matrix protein is part of the pre-integration complex. Implicated in the release from host cell mediated by Vpu. Binds to RNA. Forms the conical core that encapsulates the genomic RNA-nucleocapsid complex in the virion. Most core are conical, with only 7% tubular. The core is constituted by capsid protein hexamer subunits. The core is disassembled soon after virion entry. Host restriction factors such as TRIM5-alpha or TRIMCyp bind retroviral capsids and cause premature capsid disassembly, leading to blocks in reverse transcription. Capsid restriction by TRIM5 is one of the factors which restricts HIV-1 to the human species. Host PIN1 apparently facilitates the virion uncoating. On the other hand, interactions with PDZD8 or CYPA stabilize the capsid. In terms of biological role, encapsulates and protects viral dimeric unspliced genomic RNA (gRNA). Binds these RNAs through its zinc fingers. Acts as a nucleic acid chaperone which is involved in rearangement of nucleic acid secondary structure during gRNA retrotranscription. Also facilitates template switch leading to recombination. As part of the polyprotein, participates in gRNA dimerization, packaging, tRNA incorporation and virion assembly. Functionally, aspartyl protease that mediates proteolytic cleavages of Gag and Gag-Pol polyproteins during or shortly after the release of the virion from the plasma membrane. Cleavages take place as an ordered, step-wise cascade to yield mature proteins. This process is called maturation. Displays maximal activity during the budding process just prior to particle release from the cell. Also cleaves Nef and Vif, probably concomitantly with viral structural proteins on maturation of virus particles. Hydrolyzes host EIF4GI and PABP1 in order to shut off the capped cellular mRNA translation. The resulting inhibition of cellular protein synthesis serves to ensure maximal viral gene expression and to evade host immune response. Also mediates cleavage of host YTHDF3. Mediates cleavage of host CARD8, thereby activating the CARD8 inflammasome, leading to the clearance of latent HIV-1 in patient CD4(+) T-cells after viral reactivation; in contrast, HIV-1 can evade CARD8-sensing when its protease remains inactive in infected cells prior to viral budding. Its function is as follows. Multifunctional enzyme that converts the viral RNA genome into dsDNA in the cytoplasm, shortly after virus entry into the cell. This enzyme displays a DNA polymerase activity that can copy either DNA or RNA templates, and a ribonuclease H (RNase H) activity that cleaves the RNA strand of RNA-DNA heteroduplexes in a partially processive 3' to 5' endonucleasic mode. Conversion of viral genomic RNA into dsDNA requires many steps. A tRNA(3)-Lys binds to the primer-binding site (PBS) situated at the 5'-end of the viral RNA. RT uses the 3' end of the tRNA primer to perform a short round of RNA-dependent minus-strand DNA synthesis. The reading proceeds through the U5 region and ends after the repeated (R) region which is present at both ends of viral RNA. The portion of the RNA-DNA heteroduplex is digested by the RNase H, resulting in a ssDNA product attached to the tRNA primer. This ssDNA/tRNA hybridizes with the identical R region situated at the 3' end of viral RNA. This template exchange, known as minus-strand DNA strong stop transfer, can be either intra- or intermolecular. RT uses the 3' end of this newly synthesized short ssDNA to perform the RNA-dependent minus-strand DNA synthesis of the whole template. RNase H digests the RNA template except for two polypurine tracts (PPTs) situated at the 5'-end and near the center of the genome. It is not clear if both polymerase and RNase H activities are simultaneous. RNase H probably can proceed both in a polymerase-dependent (RNA cut into small fragments by the same RT performing DNA synthesis) and a polymerase-independent mode (cleavage of remaining RNA fragments by free RTs). Secondly, RT performs DNA-directed plus-strand DNA synthesis using the PPTs that have not been removed by RNase H as primers. PPTs and tRNA primers are then removed by RNase H. The 3' and 5' ssDNA PBS regions hybridize to form a circular dsDNA intermediate. Strand displacement synthesis by RT to the PBS and PPT ends produces a blunt ended, linear dsDNA copy of the viral genome that includes long terminal repeats (LTRs) at both ends. Integrase catalyzes viral DNA integration into the host chromosome, by performing a series of DNA cutting and joining reactions. This enzyme activity takes place after virion entry into a cell and reverse transcription of the RNA genome in dsDNA. The first step in the integration process is 3' processing. This step requires a complex comprising the viral genome, matrix protein, Vpr and integrase. This complex is called the pre-integration complex (PIC). The integrase protein removes 2 nucleotides from each 3' end of the viral DNA, leaving recessed CA OH's at the 3' ends. In the second step, the PIC enters cell nucleus. This process is mediated through integrase and Vpr proteins, and allows the virus to infect a non dividing cell. This ability to enter the nucleus is specific of lentiviruses, other retroviruses cannot and rely on cell division to access cell chromosomes. In the third step, termed strand transfer, the integrase protein joins the previously processed 3' ends to the 5' ends of strands of target cellular DNA at the site of integration. The 5'-ends are produced by integrase-catalyzed staggered cuts, 5 bp apart. A Y-shaped, gapped, recombination intermediate results, with the 5'-ends of the viral DNA strands and the 3' ends of target DNA strands remaining unjoined, flanking a gap of 5 bp. The last step is viral DNA integration into host chromosome. This involves host DNA repair synthesis in which the 5 bp gaps between the unjoined strands are filled in and then ligated. Since this process occurs at both cuts flanking the HIV genome, a 5 bp duplication of host DNA is produced at the ends of HIV-1 integration. Alternatively, Integrase may catalyze the excision of viral DNA just after strand transfer, this is termed disintegration. The polypeptide is Gag-Pol polyprotein (gag-pol) (Homo sapiens (Human)).